The chain runs to 138 residues: RutC family protein UK114 (138 aa).

This sequence belongs to the RutC family.

In terms of biological role, molecular chaperone. Seems to fulfill an ATP-independent, HSP70-like function in protein folding. May protect essential factors of cell proliferation during heat shock. No role in calpain activation. The chain is RutC family protein UK114 from Drosophila melanogaster (Fruit fly).